A 180-amino-acid polypeptide reads, in one-letter code: tRNA (cytidine(56)-2'-O)-methyltransferase (180 aa).

Residues Leu82, 112 to 116 (GAEKV), and 130 to 137 (VGNQPHSE) each bind S-adenosyl-L-methionine.

It belongs to the aTrm56 family. In terms of assembly, homodimer.

It is found in the cytoplasm. It carries out the reaction cytidine(56) in tRNA + S-adenosyl-L-methionine = 2'-O-methylcytidine(56) in tRNA + S-adenosyl-L-homocysteine + H(+). Its function is as follows. Specifically catalyzes the AdoMet-dependent 2'-O-ribose methylation of cytidine at position 56 in tRNAs. The polypeptide is tRNA (cytidine(56)-2'-O)-methyltransferase (Methanococcus vannielii (strain ATCC 35089 / DSM 1224 / JCM 13029 / OCM 148 / SB)).